We begin with the raw amino-acid sequence, 87 residues long: Small ribosomal subunit protein uS15 (87 aa).

Basic and acidic residues predominate over residues Met1–Asp19. The tract at residues Met1–Pro23 is disordered.

It belongs to the universal ribosomal protein uS15 family. Part of the 30S ribosomal subunit. Forms a bridge to the 50S subunit in the 70S ribosome, contacting the 23S rRNA.

Functionally, one of the primary rRNA binding proteins, it binds directly to 16S rRNA where it helps nucleate assembly of the platform of the 30S subunit by binding and bridging several RNA helices of the 16S rRNA. Its function is as follows. Forms an intersubunit bridge (bridge B4) with the 23S rRNA of the 50S subunit in the ribosome. The protein is Small ribosomal subunit protein uS15 of Clostridium botulinum (strain Loch Maree / Type A3).